A 149-amino-acid chain; its full sequence is Large ribosomal subunit protein uL13 (149 aa).

The protein belongs to the universal ribosomal protein uL13 family. As to quaternary structure, part of the 50S ribosomal subunit.

Its function is as follows. This protein is one of the early assembly proteins of the 50S ribosomal subunit, although it is not seen to bind rRNA by itself. It is important during the early stages of 50S assembly. This Bifidobacterium adolescentis (strain ATCC 15703 / DSM 20083 / NCTC 11814 / E194a) protein is Large ribosomal subunit protein uL13.